A 198-amino-acid polypeptide reads, in one-letter code: Recombination protein RecR (198 aa).

The C4-type zinc-finger motif lies at 57–72 (CSVCGHITDQDPCYIC). The 96-residue stretch at 80–175 (SVICVVQDPK…KLSRIAHGLP (96 aa)) folds into the Toprim domain.

It belongs to the RecR family.

In terms of biological role, may play a role in DNA repair. It seems to be involved in an RecBC-independent recombinational process of DNA repair. It may act with RecF and RecO. This Bacillus subtilis (strain 168) protein is Recombination protein RecR.